Here is a 239-residue protein sequence, read N- to C-terminus: Small ribosomal subunit protein uS3 (239 aa).

Residues 38–106 (IRELIEERFK…KTFVNVVEIK (69 aa)) form the KH type-2 domain.

It belongs to the universal ribosomal protein uS3 family. Part of the 30S ribosomal subunit. Forms a tight complex with proteins S10 and S14.

Its function is as follows. Binds the lower part of the 30S subunit head. Binds mRNA in the 70S ribosome, positioning it for translation. The chain is Small ribosomal subunit protein uS3 from Elusimicrobium minutum (strain Pei191).